We begin with the raw amino-acid sequence, 864 residues long: Leucine--tRNA ligase (864 aa).

A 'HIGH' region motif is present at residues 42–52; the sequence is PYPSGRLHMGH. A 'KMSKS' region motif is present at residues 621-625; the sequence is KMSKS. Position 624 (lysine 624) interacts with ATP.

This sequence belongs to the class-I aminoacyl-tRNA synthetase family.

Its subcellular location is the cytoplasm. The enzyme catalyses tRNA(Leu) + L-leucine + ATP = L-leucyl-tRNA(Leu) + AMP + diphosphate. The sequence is that of Leucine--tRNA ligase from Alkalilimnicola ehrlichii (strain ATCC BAA-1101 / DSM 17681 / MLHE-1).